Here is a 193-residue protein sequence, read N- to C-terminus: Ribonuclease HII (193 aa).

Residues C15 to C193 enclose the RNase H type-2 domain. 3 residues coordinate a divalent metal cation: D21, E22, and D112.

This sequence belongs to the RNase HII family. Mn(2+) serves as cofactor. It depends on Mg(2+) as a cofactor.

The protein resides in the cytoplasm. The catalysed reaction is Endonucleolytic cleavage to 5'-phosphomonoester.. Its function is as follows. Endonuclease that specifically degrades the RNA of RNA-DNA hybrids. The protein is Ribonuclease HII of Rickettsia africae (strain ESF-5).